A 250-amino-acid polypeptide reads, in one-letter code: Insertion sequence IS232 putative ATP-binding protein (250 aa).

108-115 serves as a coordination point for ATP; the sequence is GPSGVGKT.

It belongs to the IS21/IS1162 putative ATP-binding protein family.

The chain is Insertion sequence IS232 putative ATP-binding protein from Bacillus thuringiensis subsp. berliner.